Reading from the N-terminus, the 358-residue chain is MTTVPTTQRAVVVGPEDGSVVVAESIPLPDIEPDAVLVQVSAVALNPVDTKMMPGFLNPGNVLGLDFAGTVVAVGPAQPAWRSLQVGDRVFGCTDGCDSRRPRVGAFTQFTACRGSILIKMPDHMSFATAASMGNAIFSSGFALFHSLQLPGSLTATAEKSHWVLIYGGATATGTMALQFLRRAGHKPIAVCSAKHFDMAREYGAVAAFDYHSESHVQEIRDLTKNALSFAFDCVTTQSSVLACEEAMGRLGGRYTALDPFDPTLVSRKAVKLDWILTLTLMGRGSVWPKPFGCEPDEALLTWGTKLAEVAEGVLAEGDHVLKAHPMRIMEGGLDAIPSGIDAIRQGQVRGFKLVYLL.

NADP(+) is bound by residues V48 to K51, A170 to T173, S193 to H196, Y211, L258 to D259, and V349 to R350.

It belongs to the zinc-containing alcohol dehydrogenase family. As to quaternary structure, monomer.

It catalyses the reaction 10 malonyl-CoA + acetyl-CoA + 3 AH2 + 8 NADPH + 18 H(+) = cordypyrone A + 3 A + 10 CO2 + 8 NADP(+) + 11 CoA + 8 H2O. It functions in the pathway secondary metabolite biosynthesis. In terms of biological role, trans-enoyl reductase; part of the gene cluster that mediates the biosynthesis of cordypyrones A and B, 2 pyrones that show modest activities against pathogenic bacteria including methicillin-resistant Staphylococcus aureus (MRSA), Mycobacterium tuberculosis and Bacillus cereus. The HR-PKS milA catalyzes the formation of cordypyrones A via condensation of one acetate with 10 malonate units. Since milA lacks an enoyl reductase domain, the 2 beta-keto processing domains DH and KR of milA collaborate with the trans-enoyl reductase milB to catalyze the different levels of reduction. The cytochrome P450 monooxygenase milC then hydroxylates the C-22 of cordypyrones A to yield cordypyrones B. This is Trans-enoyl reductase milB from Cordyceps militaris (strain CM01) (Caterpillar fungus).